Here is a 393-residue protein sequence, read N- to C-terminus: S-adenosylmethionine sensor upstream of mTORC1 (393 aa).

Positions 1 to 35 are disordered; it reads MDLRSSAETDPDLSENHPGSVPAELQSRKQEQEKL. Residue arginine 94 coordinates S-adenosyl-L-methionine. Residues 118–141 are disordered; it reads DEKSARHATAGNANTDTNAPPQLS. Low complexity predominate over residues 125 to 136; the sequence is ATAGNANTDTNA. The S-adenosyl-L-methionine site is built by glycine 160, aspartate 178, aspartate 190, phenylalanine 191, and serine 232. The interval 362–393 is disordered; sequence ELPETPYDSDSGESQSSSAPFYELEDPILLQS.

It belongs to the BMT2/SAMTOR family. Interacts with the GATOR1 complex; interaction is disrupted when samtor binds S-adenosyl-L-methionine. Interacts with the KICSTOR complex; interaction is disrupted when bmt2/samtor binds S-adenosyl-L-methionine.

Its function is as follows. S-adenosyl-L-methionine-binding protein that acts as an inhibitor of mTORC1 signaling via interaction with the GATOR1 and KICSTOR complexes. Acts as a sensor of S-adenosyl-L-methionine to signal methionine sufficiency to mTORC1: in presence of methionine, binds S-adenosyl-L-methionine, leading to disrupt interaction with the GATOR1 and KICSTOR complexes and promote mTORC1 signaling. Upon methionine starvation, S-adenosyl-L-methionine levels are reduced, thereby promoting the association with GATOR1 and KICSTOR, leading to inhibit mTORC1 signaling. Probably also acts as a S-adenosyl-L-methionine-dependent methyltransferase. The protein is S-adenosylmethionine sensor upstream of mTORC1 of Danio rerio (Zebrafish).